Here is a 71-residue protein sequence, read N- to C-terminus: UPF0352 protein Ssed_1809 (71 aa).

This sequence belongs to the UPF0352 family.

This is UPF0352 protein Ssed_1809 from Shewanella sediminis (strain HAW-EB3).